Reading from the N-terminus, the 350-residue chain is Putative ATP-binding protein BruAb2_0487 (350 aa).

An ABC transporter domain is found at 4-234 (VSLRGISKTF…PANKFVAGFI (231 aa)). Residue 36-43 (GPSGCGKS) coordinates ATP.

This sequence belongs to the ABC transporter superfamily. As to quaternary structure, the complex is composed of two ATP-binding proteins (BruAb2_0487), two transmembrane proteins (BruAb2_0483) and a solute-binding protein (BruAb2_0484).

Its subcellular location is the cell inner membrane. In terms of biological role, probably part of an ABC transporter complex. Probably responsible for energy coupling to the transport system. This chain is Putative ATP-binding protein BruAb2_0487, found in Brucella abortus biovar 1 (strain 9-941).